Consider the following 496-residue polypeptide: Probable zinc metalloprotease SNOG_06590 (496 aa).

Residues 1–20 (MRSSMFFAVCAAAALQTALS) form the signal peptide. The N-linked (GlcNAc...) asparagine glycan is linked to Asn138. His161, Asp181, and Glu226 together coordinate Zn(2+). Asn241 is a glycosylation site (N-linked (GlcNAc...) asparagine). Asp253 serves as a coordination point for Zn(2+). 5 N-linked (GlcNAc...) asparagine glycosylation sites follow: Asn282, Asn361, Asn409, Asn415, and Asn457. The Fibronectin type-III domain occupies 402-496 (EPMNVGINTT…PFPFGCTRNC (95 aa)).

It belongs to the peptidase M28 family. M28B subfamily. It depends on Zn(2+) as a cofactor.

Its subcellular location is the secreted. In Phaeosphaeria nodorum (strain SN15 / ATCC MYA-4574 / FGSC 10173) (Glume blotch fungus), this protein is Probable zinc metalloprotease SNOG_06590.